The chain runs to 638 residues: Chaperone protein DnaK (638 aa).

Position 199 is a phosphothreonine; by autocatalysis (threonine 199). Positions tyrosine 603–alanine 618 are enriched in low complexity. Residues tyrosine 603–lysine 638 are disordered. The span at alanine 621 to lysine 638 shows a compositional bias: acidic residues.

Belongs to the heat shock protein 70 family.

Its function is as follows. Acts as a chaperone. This is Chaperone protein DnaK from Hydrogenovibrio crunogenus (strain DSM 25203 / XCL-2) (Thiomicrospira crunogena).